The following is a 439-amino-acid chain: ATP-dependent RNA helicase RhlB (439 aa).

Positions 9–37 (QKFADLPLHPEVKQALAENGFEFCTPIQA) match the Q motif motif. In terms of domain architecture, Helicase ATP-binding spans 40 to 219 (LPVLLQSKDI…YDHMNEPVKV (180 aa)). 53–60 (AQTGTGKT) provides a ligand contact to ATP. Residues 165–168 (DEAD) carry the DEAD box motif. In terms of domain architecture, Helicase C-terminal spans 243–390 (KMRLLLTLIE…VSNYDRDALL (148 aa)). The disordered stretch occupies residues 395–439 (PPVKIHRRHPAGARNLRERSGAGRPQGAHRSGGRPPRHDRTRRQP). The segment covering 425 to 439 (SGGRPPRHDRTRRQP) has biased composition (basic residues).

The protein belongs to the DEAD box helicase family. RhlB subfamily. Component of the RNA degradosome, which is a multiprotein complex involved in RNA processing and mRNA degradation.

The protein resides in the cytoplasm. It catalyses the reaction ATP + H2O = ADP + phosphate + H(+). Its function is as follows. DEAD-box RNA helicase involved in RNA degradation. Has RNA-dependent ATPase activity and unwinds double-stranded RNA. In Shewanella sp. (strain ANA-3), this protein is ATP-dependent RNA helicase RhlB.